The chain runs to 167 residues: UPF0114 protein Tola_1474 (167 aa).

4 helical membrane passes run 15-35 (IMAP…IKFF), 53-73 (LILI…IVMV), 109-129 (VAAS…MNTE), and 136-156 (IKWY…MGYL).

Belongs to the UPF0114 family.

The protein localises to the cell membrane. The sequence is that of UPF0114 protein Tola_1474 from Tolumonas auensis (strain DSM 9187 / NBRC 110442 / TA 4).